We begin with the raw amino-acid sequence, 222 residues long: UPF0502 protein XAC4278 (222 aa).

It belongs to the UPF0502 family.

In Xanthomonas axonopodis pv. citri (strain 306), this protein is UPF0502 protein XAC4278.